The chain runs to 83 residues: Cytochrome b559 subunit alpha (83 aa).

A helical transmembrane segment spans residues 21–35 (VIHSITIPSLFIAGW). Residue His-23 coordinates heme.

The protein belongs to the PsbE/PsbF family. Heterodimer of an alpha subunit and a beta subunit. PSII is composed of 1 copy each of membrane proteins PsbA, PsbB, PsbC, PsbD, PsbE, PsbF, PsbH, PsbI, PsbJ, PsbK, PsbL, PsbM, PsbT, PsbX, PsbY, PsbZ, Psb30/Ycf12, at least 3 peripheral proteins of the oxygen-evolving complex and a large number of cofactors. It forms dimeric complexes. Requires heme b as cofactor.

The protein localises to the plastid. Its subcellular location is the chloroplast thylakoid membrane. This b-type cytochrome is tightly associated with the reaction center of photosystem II (PSII). PSII is a light-driven water:plastoquinone oxidoreductase that uses light energy to abstract electrons from H(2)O, generating O(2) and a proton gradient subsequently used for ATP formation. It consists of a core antenna complex that captures photons, and an electron transfer chain that converts photonic excitation into a charge separation. The chain is Cytochrome b559 subunit alpha from Panax ginseng (Korean ginseng).